A 37-amino-acid chain; its full sequence is Large ribosomal subunit protein bL36 (37 aa).

The protein belongs to the bacterial ribosomal protein bL36 family.

This is Large ribosomal subunit protein bL36 from Heliobacterium modesticaldum (strain ATCC 51547 / Ice1).